The chain runs to 255 residues: Fe(3+) dicitrate transport ATP-binding protein FecE (255 aa).

The ABC transporter domain maps to 3–238 (LRTENLTVSY…GLLRTVFSVE (236 aa)). 35–42 (GPNGCGKS) is a binding site for ATP.

It belongs to the ABC transporter superfamily. The complex is composed of two ATP-binding proteins (FecE), two transmembrane proteins (FecC and FecD) and a solute-binding protein (FecB).

Its subcellular location is the cell inner membrane. The enzyme catalyses iron(III) dicitrate(out) + ATP + H2O = iron(III) dicitrate(in) + ADP + phosphate + H(+). Part of the ABC transporter complex FecBCDE involved in citrate-dependent Fe(3+) uptake. Binds ATP. Probably responsible for energy coupling to the transport system. This is Fe(3+) dicitrate transport ATP-binding protein FecE from Escherichia coli (strain K12).